The following is an 82-amino-acid chain: Omega-conotoxin PnVIB (82 aa).

The first 22 residues, 1–22 (MKLTCMMIVAVLFLTAWTVVTA), serve as a signal peptide directing secretion. Residues 23–52 (EPHSSNVLENLYLKAHHEMENPEASKLNTR) constitute a propeptide that is removed on maturation. 3 disulfides stabilise this stretch: Cys56-Cys73, Cys63-Cys77, and Cys72-Cys81.

As to expression, expressed by the venom duct.

It is found in the secreted. In terms of biological role, omega-conotoxins act at presynaptic membranes, they bind and block voltage-gated calcium channels (Cav). Acts on high voltage-activated (HVA) calcium currents in molluscan neurons. The chain is Omega-conotoxin PnVIB from Conus pennaceus (Feathered cone).